Reading from the N-terminus, the 510-residue chain is ATP synthase subunit alpha (510 aa).

An ATP-binding site is contributed by 169–176 (GDRQTGKT).

Belongs to the ATPase alpha/beta chains family. As to quaternary structure, F-type ATPases have 2 components, CF(1) - the catalytic core - and CF(0) - the membrane proton channel. CF(1) has five subunits: alpha(3), beta(3), gamma(1), delta(1), epsilon(1). CF(0) has four main subunits: a(1), b(1), b'(1) and c(9-12).

It localises to the cell inner membrane. The catalysed reaction is ATP + H2O + 4 H(+)(in) = ADP + phosphate + 5 H(+)(out). Its function is as follows. Produces ATP from ADP in the presence of a proton gradient across the membrane. The alpha chain is a regulatory subunit. The protein is ATP synthase subunit alpha of Rhodopseudomonas palustris (strain BisA53).